The primary structure comprises 238 residues: Uroporphyrinogen-III C-methyltransferase (238 aa).

Residues Pro-11, 87 to 89 (GGD), 117 to 118 (TS), and Met-170 each bind S-adenosyl-L-homocysteine.

It belongs to the precorrin methyltransferase family. As to quaternary structure, monomer.

It carries out the reaction uroporphyrinogen III + 2 S-adenosyl-L-methionine = precorrin-2 + 2 S-adenosyl-L-homocysteine + H(+). It functions in the pathway cofactor biosynthesis; adenosylcobalamin biosynthesis; precorrin-2 from uroporphyrinogen III: step 1/1. Its pathway is porphyrin-containing compound metabolism; siroheme biosynthesis; precorrin-2 from uroporphyrinogen III: step 1/1. Its activity is regulated as follows. SUMT exhibits a substrate inhibition phenomenon at uroporphyrinogen III concentrations above 0.5 uM; this property might play a regulatory role in cobalamin biosynthesis. Catalyzes the two successive C-2 and C-7 methylation reactions involved in the conversion of uroporphyrinogen III to precorrin-2 via the intermediate formation of precorrin-1. It is a step in the biosynthesis of both cobalamin (vitamin B12) and siroheme. The chain is Uroporphyrinogen-III C-methyltransferase from Priestia megaterium (Bacillus megaterium).